Reading from the N-terminus, the 148-residue chain is uncharacterized protein (148 aa).

The protein resides in the plastid. It localises to the chloroplast. This is an uncharacterized protein from Porphyra purpurea (Red seaweed).